The primary structure comprises 340 residues: Uroporphyrinogen decarboxylase (340 aa).

Residues 21–25 (RQAGR), aspartate 71, tyrosine 148, serine 203, and histidine 316 contribute to the substrate site.

Belongs to the uroporphyrinogen decarboxylase family. In terms of assembly, homodimer.

The protein resides in the cytoplasm. The enzyme catalyses uroporphyrinogen III + 4 H(+) = coproporphyrinogen III + 4 CO2. Its pathway is porphyrin-containing compound metabolism; protoporphyrin-IX biosynthesis; coproporphyrinogen-III from 5-aminolevulinate: step 4/4. Catalyzes the decarboxylation of four acetate groups of uroporphyrinogen-III to yield coproporphyrinogen-III. This Campylobacter jejuni subsp. jejuni serotype O:6 (strain 81116 / NCTC 11828) protein is Uroporphyrinogen decarboxylase.